A 498-amino-acid chain; its full sequence is Cobyric acid synthase (498 aa).

In terms of domain architecture, GATase cobBQ-type spans 257–447; the sequence is DLEIAVLRLP…LHGLLDNGPW (191 aa). The active-site Nucleophile is Cys338. The active site involves His439.

It belongs to the CobB/CobQ family. CobQ subfamily.

The protein operates within cofactor biosynthesis; adenosylcobalamin biosynthesis. Its function is as follows. Catalyzes amidations at positions B, D, E, and G on adenosylcobyrinic A,C-diamide. NH(2) groups are provided by glutamine, and one molecule of ATP is hydrogenolyzed for each amidation. This chain is Cobyric acid synthase, found in Synechococcus sp. (strain CC9605).